The chain runs to 330 residues: Polyprenyl transferase ausN (330 aa).

The next 5 helical transmembrane spans lie at A116–P136, L165–P185, I189–V209, A238–L258, and V260–A280.

It belongs to the UbiA prenyltransferase family. Mg(2+) is required as a cofactor.

Its subcellular location is the membrane. The enzyme catalyses 3,5-dimethylorsellinate + (2E,6E)-farnesyl diphosphate = (3R)-3-farnesyl-6-hydroxy-2,3,5-trimethyl-4-oxocyclohexa-1,5-diene-1-carboxylate + diphosphate + H(+). Its pathway is secondary metabolite biosynthesis; terpenoid biosynthesis. In terms of biological role, polyprenyl transferase; part of the gene cluster B that mediates the biosynthesis of austinol and dehydroaustinol, two fungal meroterpenoids. The first step of the pathway is the synthesis of 3,5-dimethylorsellinic acid by the polyketide synthase ausA. 3,5-dimethylorsellinic acid is then prenylated by the polyprenyl transferase ausN. Further epoxidation by the FAD-dependent monooxygenase ausM and cyclization by the probable terpene cyclase ausL lead to the formation of protoaustinoid A. Protoaustinoid A is then oxidized to spiro-lactone preaustinoid A3 by the combined action of the FAD-binding monooxygenases ausB and ausC, and the dioxygenase ausE. Acid-catalyzed keto-rearrangement and ring contraction of the tetraketide portion of preaustinoid A3 by ausJ lead to the formation of preaustinoid A4. The aldo-keto reductase ausK, with the help of ausH, is involved in the next step by transforming preaustinoid A4 into isoaustinone which is in turn hydroxylated by the P450 monooxygenase ausI to form austinolide. Finally, the cytochrome P450 monooxygenase ausG modifies austinolide to austinol. Austinol can be further modified to dehydroaustinol which forms a diffusible complex with diorcinol that initiates conidiation. Due to genetic rearrangements of the clusters and the subsequent loss of some enzymes, the end products of the Emericella nidulans austinoid biosynthesis clusters are austinol and dehydroaustinol, even if additional enzymes, such as the O-acetyltransferase ausQ and the cytochrome P450 monooxygenase ausR are still functional. The chain is Polyprenyl transferase ausN from Emericella nidulans (strain FGSC A4 / ATCC 38163 / CBS 112.46 / NRRL 194 / M139) (Aspergillus nidulans).